The following is a 372-amino-acid chain: tRNA-specific 2-thiouridylase MnmA (372 aa).

ATP contacts are provided by residues 9–16 and methionine 35; that span reads GMSGGVDS. Residues 95–97 are interaction with target base in tRNA; sequence NPD. Cysteine 100 serves as the catalytic Nucleophile. Cysteine 100 and cysteine 201 are disulfide-bonded. Glycine 124 serves as a coordination point for ATP. Residues 151–153 are interaction with tRNA; it reads KDQ. Catalysis depends on cysteine 201, which acts as the Cysteine persulfide intermediate. The tract at residues 317–318 is interaction with tRNA; it reads RY.

Belongs to the MnmA/TRMU family.

It is found in the cytoplasm. It catalyses the reaction S-sulfanyl-L-cysteinyl-[protein] + uridine(34) in tRNA + AH2 + ATP = 2-thiouridine(34) in tRNA + L-cysteinyl-[protein] + A + AMP + diphosphate + H(+). In terms of biological role, catalyzes the 2-thiolation of uridine at the wobble position (U34) of tRNA, leading to the formation of s(2)U34. The protein is tRNA-specific 2-thiouridylase MnmA of Janthinobacterium sp. (strain Marseille) (Minibacterium massiliensis).